A 353-amino-acid polypeptide reads, in one-letter code: Photosystem II protein D1 (353 aa).

3 helical membrane passes run 29–46, 118–133, and 142–156; these read YVGW…TATI, HFLI…EWEL, and WICV…AATA. His-118 contacts chlorophyll a. Pheophytin a is bound at residue Tyr-126. Asp-170 and Glu-189 together coordinate [CaMn4O5] cluster. A helical membrane pass occupies residues 197 to 218; it reads FHMLGVAGVFGGSLFSAMHGSL. A chlorophyll a-binding site is contributed by His-198. A quinone-binding positions include His-215 and 264 to 265; that span reads SF. Residue His-215 participates in Fe cation binding. Residue His-272 participates in Fe cation binding. A helical transmembrane segment spans residues 274–288; it reads FLAAWPVVGIWFTSL. Positions 332, 333, 342, and 344 each coordinate [CaMn4O5] cluster. The propeptide occupies 345 to 353; that stretch reads AVKAPSIIG.

The protein belongs to the reaction center PufL/M/PsbA/D family. In terms of assembly, PSII is composed of 1 copy each of membrane proteins PsbA, PsbB, PsbC, PsbD, PsbE, PsbF, PsbH, PsbI, PsbJ, PsbK, PsbL, PsbM, PsbT, PsbX, PsbY, PsbZ, Psb30/Ycf12, peripheral proteins PsbO, CyanoQ (PsbQ), PsbU, PsbV and a large number of cofactors. It forms dimeric complexes. It depends on The D1/D2 heterodimer binds P680, chlorophylls that are the primary electron donor of PSII, and subsequent electron acceptors. It shares a non-heme iron and each subunit binds pheophytin, quinone, additional chlorophylls, carotenoids and lipids. D1 provides most of the ligands for the Mn4-Ca-O5 cluster of the oxygen-evolving complex (OEC). There is also a Cl(-1) ion associated with D1 and D2, which is required for oxygen evolution. The PSII complex binds additional chlorophylls, carotenoids and specific lipids. as a cofactor. In terms of processing, tyr-161 forms a radical intermediate that is referred to as redox-active TyrZ, YZ or Y-Z. Post-translationally, C-terminally processed by CtpA; processing is essential to allow assembly of the oxygen-evolving complex and thus photosynthetic growth.

It is found in the cellular thylakoid membrane. The catalysed reaction is 2 a plastoquinone + 4 hnu + 2 H2O = 2 a plastoquinol + O2. Functionally, photosystem II (PSII) is a light-driven water:plastoquinone oxidoreductase that uses light energy to abstract electrons from H(2)O, generating O(2) and a proton gradient subsequently used for ATP formation. It consists of a core antenna complex that captures photons, and an electron transfer chain that converts photonic excitation into a charge separation. The D1/D2 (PsbA/PsbD) reaction center heterodimer binds P680, the primary electron donor of PSII as well as several subsequent electron acceptors. This chain is Photosystem II protein D1, found in Prochlorothrix hollandica.